Consider the following 79-residue polypeptide: Large ribosomal subunit protein bL28 (79 aa).

It belongs to the bacterial ribosomal protein bL28 family.

The polypeptide is Large ribosomal subunit protein bL28 (Porphyromonas gingivalis (strain ATCC 33277 / DSM 20709 / CIP 103683 / JCM 12257 / NCTC 11834 / 2561)).